A 150-amino-acid chain; its full sequence is Large ribosomal subunit protein uL15 (150 aa).

The segment at 1–57 is disordered; it reads MSLTLQSLKPQKGARRRKMRKGRGIAAGQGASCGFGMRGQKSRSGRPTRPGFEGGQM. The span at 12-23 shows a compositional bias: basic residues; the sequence is KGARRRKMRKGR. A compositionally biased stretch (gly residues) spans 25–37; sequence IAAGQGASCGFGM.

It belongs to the universal ribosomal protein uL15 family. In terms of assembly, part of the 50S ribosomal subunit.

Its function is as follows. Binds to the 23S rRNA. The protein is Large ribosomal subunit protein uL15 of Synechococcus sp. (strain RCC307).